Here is a 305-residue protein sequence, read N- to C-terminus: E3 ubiquitin-protein ligase RNF115 (305 aa).

Alanine 2 is modified (N-acetylalanine). The span at 100-110 (NRANERGHQTH) shows a compositional bias: basic and acidic residues. The disordered stretch occupies residues 100 to 139 (NRANERGHQTHTDFWGPSRPPRLPMTRRYRSRGSTRPDRS). Residue serine 133 is modified to Phosphoserine. The RING-type zinc-finger motif lies at 229 to 270 (CPVCKEDYTVEEKVRQLPCNHFFHSSCIVPWLELHDTCPVCR). Residues 274 to 305 (NGEDSTRQTQSSEASASNRFSNDSQLHDRWTF) are disordered. Polar residues predominate over residues 280 to 297 (RQTQSSEASASNRFSNDS).

Interacts with RAB7A. Interacts with EGFR and FLT3. Interacts with BST2. Interacts with STX17. Interacts with YWHAE. In terms of processing, phosphorylated by AKT1, allowing association with the 14-3-3 chaperones that facilitates associating with TLRs. Deubiquitinated by USP9X; antogonizing its autoubiquitination and subsequent proteasomal degradation. Post-translationally, RING-type zinc finger-dependent and E2-dependent autoubiquitination.

Its subcellular location is the cytoplasm. It localises to the cytoplasmic vesicle. The protein resides in the phagosome. The protein localises to the nucleus. It is found in the endoplasmic reticulum. Its subcellular location is the golgi apparatus. It catalyses the reaction S-ubiquitinyl-[E2 ubiquitin-conjugating enzyme]-L-cysteine + [acceptor protein]-L-lysine = [E2 ubiquitin-conjugating enzyme]-L-cysteine + N(6)-ubiquitinyl-[acceptor protein]-L-lysine.. It functions in the pathway protein modification; protein ubiquitination. Its function is as follows. E3 ubiquitin-protein ligase that catalyzes the 'Lys-48'- and/or 'Lys-63'-linked polyubiquitination of various substrates and thereby plays a role in a number of signaling pathways including autophagy, innate immunity, cell proliferation and cell death. Plays a role in the endosomal trafficking and degradation of membrane receptors including EGFR, FLT3, MET and CXCR4 through their polyubiquitination. Participates together with BST2 in antiviral immunity by facilitating the internalization of HIV-1 virions into intracellular vesicles leading to their lysosomal degradation. Also possesses an antiviral activity independently of BST2 by promoting retroviral GAG proteins ubiquitination, redistribution to endo-lysosomal compartments and, ultimately, lysosomal degradation. Catalyzes distinct types of ubiquitination on MAVS and STING1 at different phases of viral infection to promote innate antiviral response. Mediates the 'Lys-48'-linked ubiquitination of MAVS leading to its proteasomal degradation and ubiquitinates STING1 via 'Lys-63'-linked polyubiquitination, critical for its oligomerization and the subsequent recruitment of TBK1. Plays a positive role in the autophagosome-lysosome fusion by interacting with STX17 and enhancing its stability without affecting 'Lys-48'- or 'Lys-63'-linked polyubiquitination levels, which in turn promotes autophagosome maturation. Negatively regulates TLR-induced expression of proinflammatory cytokines by catalyzing 'Lys-11'-linked ubiquitination of RAB1A and RAB13 to inhibit post-ER trafficking of TLRs to the Golgi by RAB1A and subsequently from the Golgi apparatus to the cell surface by RAB13. The chain is E3 ubiquitin-protein ligase RNF115 from Mus musculus (Mouse).